Here is a 665-residue protein sequence, read N- to C-terminus: Lamin-A (665 aa).

Met-1 is modified (N-acetylmethionine). The head stretch occupies residues 1–29 (METPGQKRATRSTHTPLSPTRITRLQEKE). Residue Ser-18 is modified to Phosphoserine. In terms of domain architecture, IF rod spans 27 to 383 (EKEDLQGLND…KLLEGEEERL (357 aa)). The interval 30 to 66 (DLQGLNDRLAVYIDKVRSLELENARLRLRITESEDVI) is coil 1A. Residues 67-76 (SREVTGIKSA) form a linker 1 region. The interval 77 to 214 (YETELADARK…SIYNEEMRET (138 aa)) is coil 1B. The linker 2 stretch occupies residues 215–238 (KRRHETRLVEVDNGRQREFESKLA). Positions 239–383 (DALHELRAQH…KLLEGEEERL (145 aa)) are coil 2. 3 disordered regions span residues 381 to 441 (ERLR…SVEE), 550 to 581 (DDED…GEYN), and 602 to 641 (ASQG…LGES). The segment at 384-664 (RLSPSPNTQK…AQVAPQNCSI (281 aa)) is tail. Position 388 is a phosphoserine (Ser-388). Low complexity predominate over residues 399-411 (IASHSGAHISSSA). The Nuclear localization signal signature appears at 413–418 (KRRRLE). Positions 425 to 542 (SSFTQHARTT…EEVAMRKLVR (118 aa)) constitute an LTD domain. Residues 427-436 (FTQHARTTGK) show a composition bias toward polar residues. The span at 605-630 (GSGLVTGSSGSSSSSVTLTRTYRSTG) shows a compositional bias: low complexity. A Cysteine methyl ester modification is found at Cys-662. Residue Cys-662 is the site of S-farnesyl cysteine attachment. Positions 663–665 (SIM) are cleaved as a propeptide — removed in mature form.

Belongs to the intermediate filament family. In terms of assembly, homodimer. Lamin dimers then assemble into dimeric head-to-tail polymers. Ultimately, two head-to-tail polymers assemble laterally into a protofilament with a uniformly shaped rod of 3.5 nm in diameter. Phosphorylation plays a key role in lamin organization, subcellular localization and nuclear envelope disintegration. Phosphorylation by CDK1 at Ser-18 at the onset of mitosis drives lamin disassembly and nuclear envelope breakdown.

It is found in the nucleus lamina. The protein localises to the nucleus envelope. Its subcellular location is the nucleus. The protein resides in the nucleoplasm. It localises to the nucleus matrix. Its function is as follows. Lamins are intermediate filament proteins that assemble into a filamentous meshwork, and which constitute the major components of the nuclear lamina, a fibrous layer on the nucleoplasmic side of the inner nuclear membrane. Lamins provide a framework for the nuclear envelope, bridging the nuclear envelope and chromatin, thereby playing an important role in nuclear assembly, chromatin organization, nuclear membrane and telomere dynamics. The structural integrity of the lamina is strictly controlled by the cell cycle, as seen by the disintegration and formation of the nuclear envelope in prophase and telophase, respectively. The protein is Lamin-A (lmna) of Xenopus laevis (African clawed frog).